The chain runs to 155 residues: Ribosomal RNA large subunit methyltransferase H (155 aa).

S-adenosyl-L-methionine is bound by residues Leu-73, Gly-104, and 123 to 128 (LSALTL).

The protein belongs to the RNA methyltransferase RlmH family. Homodimer.

It localises to the cytoplasm. It carries out the reaction pseudouridine(1915) in 23S rRNA + S-adenosyl-L-methionine = N(3)-methylpseudouridine(1915) in 23S rRNA + S-adenosyl-L-homocysteine + H(+). Its function is as follows. Specifically methylates the pseudouridine at position 1915 (m3Psi1915) in 23S rRNA. This is Ribosomal RNA large subunit methyltransferase H from Saccharophagus degradans (strain 2-40 / ATCC 43961 / DSM 17024).